The following is a 570-amino-acid chain: Cation/calcium exchanger 1 (570 aa).

Transmembrane regions (helical) follow at residues 14-34 (LSLL…ASQT), 97-117 (SPVL…YLLG), 141-161 (MAGV…SSVV), 176-196 (ILGG…VLIG), 212-232 (VFLL…KVTI), 235-255 (ALCY…SHFF), 344-364 (CAVV…CSHY), 371-391 (LILY…AYLT), 401-421 (FSLV…YMIA), 427-447 (LLIS…LTVL), 479-499 (YAGP…ISSL), 513-533 (SLLE…VIMP), and 546-566 (GLLA…FGVL).

The protein belongs to the Ca(2+):cation antiporter (CaCA) (TC 2.A.19) family. Cation/calcium exchanger (CCX) subfamily. As to expression, expressed in roots, leaves, stems and flowers.

The protein localises to the vacuole membrane. In terms of biological role, vacuolar membrane-localized H(+)-dependent K(+) and Na(+) transporter. The chain is Cation/calcium exchanger 1 (CCX1) from Arabidopsis thaliana (Mouse-ear cress).